The following is a 209-amino-acid chain: Putative 3-methyladenine DNA glycosylase (209 aa).

This sequence belongs to the DNA glycosylase MPG family.

The sequence is that of Putative 3-methyladenine DNA glycosylase from Lactiplantibacillus plantarum (strain ATCC BAA-793 / NCIMB 8826 / WCFS1) (Lactobacillus plantarum).